The sequence spans 575 residues: Electron transfer flavoprotein-ubiquinone oxidoreductase, mitochondrial (575 aa).

Residues 1–33 constitute a mitochondrion transit peptide; sequence MQRVLRAAAAGIGHASGHRAPRWGAAAAAARWL. 44–58 is a binding site for FAD; it reads VVVVGAGPAGLAAAI. An intramembrane segment occupies 82-103; the sequence is VGAHVLSGNVFEPRALDELIPK. Gly-276 and Gly-277 together coordinate a ubiquinone. The stretch at 343–363 is an intramembrane region; that stretch reads IPNPVFPGGAIIGCSAGFLNV. 4 residues coordinate [4Fe-4S] cluster: Cys-520, Cys-544, Cys-547, and Cys-550. The 4Fe-4S ferredoxin-type domain maps to 535 to 564; sequence QKLHINAQNCLHCKACDIKDPKQNIEWTVP.

It belongs to the ETF-QO/FixC family. Requires [4Fe-4S] cluster as cofactor. FAD serves as cofactor.

The protein resides in the mitochondrion inner membrane. It carries out the reaction a ubiquinone + reduced [electron-transfer flavoprotein] = a ubiquinol + oxidized [electron-transfer flavoprotein] + H(+). In terms of biological role, accepts electrons from ETF and reduces ubiquinone. The sequence is that of Electron transfer flavoprotein-ubiquinone oxidoreductase, mitochondrial from Oryza sativa subsp. japonica (Rice).